Here is a 347-residue protein sequence, read N- to C-terminus: S-adenosylmethionine:tRNA ribosyltransferase-isomerase (347 aa).

The protein belongs to the QueA family. In terms of assembly, monomer.

The protein resides in the cytoplasm. It carries out the reaction 7-aminomethyl-7-carbaguanosine(34) in tRNA + S-adenosyl-L-methionine = epoxyqueuosine(34) in tRNA + adenine + L-methionine + 2 H(+). The protein operates within tRNA modification; tRNA-queuosine biosynthesis. Functionally, transfers and isomerizes the ribose moiety from AdoMet to the 7-aminomethyl group of 7-deazaguanine (preQ1-tRNA) to give epoxyqueuosine (oQ-tRNA). The sequence is that of S-adenosylmethionine:tRNA ribosyltransferase-isomerase from Pseudomonas paraeruginosa (strain DSM 24068 / PA7) (Pseudomonas aeruginosa (strain PA7)).